A 284-amino-acid chain; its full sequence is Protein-S-isoprenylcysteine O-methyltransferase (284 aa).

Topologically, residues 1-16 are cytoplasmic; that stretch reads MAGCAARVPPGSEARL. Residues 17-33 form a helical membrane-spanning segment; that stretch reads SLATFLLGASVLALPLL. Over 34–41 the chain is Lumenal; it reads TRAGLQGR. Residues 42–59 form a helical membrane-spanning segment; the sequence is TGLALYVAGLNALLLLLY. At 60 to 69 the chain is on the cytoplasmic side; the sequence is RPPRYQIAIR. Residues 70–87 traverse the membrane as a helical segment; that stretch reads ACFLGFVFGCGVLLSFSQ. The Lumenal portion of the chain corresponds to 88–92; it reads SSWNH. Residues 93 to 112 traverse the membrane as a helical segment; that stretch reads FGWYVCSLSLFHYSEYLVTA. Residues 113–131 lie on the Cytoplasmic side of the membrane; the sequence is VNNPKSLSLDSFLLNHSLE. A helical membrane pass occupies residues 132-149; it reads YTVAALSSWIEFTLENIF. At 150-154 the chain is on the lumenal side; the sequence is WPELK. The chain crosses the membrane as a helical span at residues 155–174; it reads QITWLSAAGLLMVIFGECLR. The Cytoplasmic portion of the chain corresponds to 175–212; sequence KVAMFTAGSNFNHVVQSEKSDTHTLVTSGVYAWCRHPS. Residues Gln-190, 197–200, Tyr-205, and 210–213 each bind S-adenosyl-L-methionine; these read HTLV and HPSY. A helical membrane pass occupies residues 213-228; sequence YVGWFYWSIGTQVMLC. A topological domain (lumenal) is located at residue Asn-229. The helical transmembrane segment at 230–244 threads the bilayer; it reads PICGVVYALTVWRFF. At 245–284 the chain is on the cytoplasmic side; sequence RDRTEEEEISLIHFFGEEYLDYKKRVPTGLPFIKGVKVGL. Arg-247 is a binding site for substrate. An S-adenosyl-L-methionine-binding site is contributed by Glu-251.

The protein belongs to the class VI-like SAM-binding methyltransferase superfamily. Isoprenylcysteine carboxyl methyltransferase family.

It is found in the endoplasmic reticulum membrane. It catalyses the reaction [protein]-C-terminal S-[(2E,6E)-farnesyl]-L-cysteine + S-adenosyl-L-methionine = [protein]-C-terminal S-[(2E,6E)-farnesyl]-L-cysteine methyl ester + S-adenosyl-L-homocysteine. Functionally, catalyzes the post-translational methylation of isoprenylated C-terminal cysteine residues. The chain is Protein-S-isoprenylcysteine O-methyltransferase from Rattus norvegicus (Rat).